A 109-amino-acid polypeptide reads, in one-letter code: Probable endoribonuclease MazF5 (109 aa).

The protein belongs to the PemK/MazF family. As to quaternary structure, forms a complex with cognate antitoxin MazE5.

Functionally, toxic component of a type II toxin-antitoxin (TA) system. Upon expression in M.smegmatis inhibits colony formation. Its toxic effect is neutralized by coexpression with cognate antitoxin MazE5. Probably an endoribonuclease. The protein is Probable endoribonuclease MazF5 (mazF5) of Mycobacterium tuberculosis (strain ATCC 25618 / H37Rv).